We begin with the raw amino-acid sequence, 1048 residues long: Probable histidine kinase 2 (1048 aa).

Residues 1 to 16 lie on the Cytoplasmic side of the membrane; the sequence is MREVEEVSKWRRRCCY. Residues 17 to 37 form a helical membrane-spanning segment; that stretch reads FWILFPLAVIATCMTITVVTF. Residues 38–336 are Extracellular-facing; sequence CSSTMYMTEV…AMVGVFRRGG (299 aa). A helical membrane pass occupies residues 337 to 357; that stretch reads VTMVAVACAAAAAATVACVLM. At 358 to 1048 the chain is on the cytoplasmic side; it reads ARALRRAVAR…AVHGVCKGKN (691 aa). Residues 398–662 enclose the Histidine kinase domain; sequence SASHDIRSAL…CFGFNVLLKT (265 aa). Position 401 is a phosphohistidine; by autocatalysis (H401). Positions 912 to 1044 constitute a Response regulatory domain; sequence HVLLVEDTLV…RIVEAVHGVC (133 aa). D975 carries the 4-aspartylphosphate modification.

Activation probably requires a transfer of a phosphate group between a His in the transmitter domain and an Asp of the receiver domain.

The protein localises to the cell membrane. The enzyme catalyses ATP + protein L-histidine = ADP + protein N-phospho-L-histidine.. Cytokinin receptor related to bacterial two-component regulators. Functions as a histidine kinase and transmits the stress signal to a downstream MAPK cascade. The polypeptide is Probable histidine kinase 2 (Oryza sativa subsp. indica (Rice)).